A 155-amino-acid chain; its full sequence is Ribosome maturation factor RimP (155 aa).

Belongs to the RimP family.

It localises to the cytoplasm. In terms of biological role, required for maturation of 30S ribosomal subunits. This is Ribosome maturation factor RimP from Phocaeicola vulgatus (strain ATCC 8482 / DSM 1447 / JCM 5826 / CCUG 4940 / NBRC 14291 / NCTC 11154) (Bacteroides vulgatus).